The following is a 109-amino-acid chain: Histidine-rich carboxyl terminus protein 1 (109 aa).

The chain crosses the membrane as a helical span at residues 13 to 33; that stretch reads WITGTALAFLMLLWLMALCLF. The disordered stretch occupies residues 77 to 109; the sequence is TSVGVHHHHHHSPHRLHHHKHHHRHHHAHGARR. Over residues 81–109 the composition is skewed to basic residues; it reads VHHHHHHSPHRLHHHKHHHRHHHAHGARR.

It localises to the membrane. The sequence is that of Histidine-rich carboxyl terminus protein 1 (Hrct1) from Mus musculus (Mouse).